The primary structure comprises 648 residues: RAF proto-oncogene serine/threonine-protein kinase (648 aa).

Residue Ser-29 is modified to Phosphoserine; by MAPK1. Ser-43 carries the post-translational modification Phosphoserine; by PKA and MAPK1. Residues 56–131 enclose the RBD domain; the sequence is NTIRVFLPNK…IGEELQVDFL (76 aa). The segment at 138–184 adopts a Phorbol-ester/DAG-type zinc-finger fold; the sequence is THNFARKTFLKLAFCDICQKFLLNGFRCQTCGYKFHEHCSTKVPTMC. Zn(2+) contacts are provided by His-139, Cys-152, Cys-155, Cys-165, Cys-168, His-173, Cys-176, and Cys-184. Residues 205-265 form a disordered region; it reads GVPAPPSFPM…RSTSTPNVHM (61 aa). Phosphoserine; by PKA is present on Ser-233. A compositionally biased stretch (polar residues) spans 239–265; the sequence is TFNTSSPSSEGSLSQRQRSTSTPNVHM. Position 252 is a phosphoserine (Ser-252). At Ser-259 the chain carries Phosphoserine; by PKA, PKC and PKB/AKT1. Thr-268 carries the phosphothreonine; by autocatalysis modification. Thr-269 bears the Phosphothreonine; by PKA mark. Residues 281 to 335 form a disordered region; that stretch reads IRSHSESASPSALSSSPNNLSPTGWSQPKTPVPAQRERAPGSGTQEKNKIRPRGQ. A compositionally biased stretch (low complexity) spans 286-301; it reads ESASPSALSSSPNNLS. Phosphoserine; by MAPK1 is present on residues Ser-289, Ser-296, and Ser-301. The interaction with PEBP1/RKIP stretch occupies residues 331 to 349; that stretch reads RPRGQRDSSYYWEIEASEV. Residue Ser-338 is modified to Phosphoserine; by PAK1, PAK2, PAK3 and PAK5. At Ser-339 the chain carries Phosphoserine; by PAK1, PAK2 and PAK3. Phosphotyrosine; by SRC is present on residues Tyr-340 and Tyr-341. A Protein kinase domain is found at 349–609; it reads VMLSTRIGSG…PQILSSIELL (261 aa). ATP-binding positions include 355–363 and Lys-375; that span reads IGSGSFGTV. Asp-468 acts as the Proton acceptor in catalysis. Ser-471 carries the post-translational modification Phosphoserine. Residue Thr-491 is modified to Phosphothreonine. Ser-494 is subject to Phosphoserine. A phosphoserine; by PKC mark is found at Ser-497 and Ser-499. Arg-563 is modified (symmetric dimethylarginine; by PRMT5). Residue Ser-621 is modified to Phosphoserine. Ser-642 carries the phosphoserine; by MAPK1 modification.

This sequence belongs to the protein kinase superfamily. TKL Ser/Thr protein kinase family. RAF subfamily. In terms of assembly, monomer. Homodimer. Heterodimerizes with BRAF and this heterodimer possesses a highly increased kinase activity compared to the respective homodimers or monomers. Heterodimerization is mitogen-regulated and enhanced by 14-3-3 proteins. MAPK1/ERK2 activation can induce a negative feedback that promotes the dissociation of the heterodimer. Forms a multiprotein complex with Ras (M-Ras/MRAS), SHOC2 and protein phosphatase 1 (PPP1CA, PPP1CB and PPP1CC). Interacts with LZTR1. Interacts with Ras proteins; the interaction is antagonized by RIN1. Weakly interacts with RIT1. Interacts (via N-terminus) with RGS14 (via RBD domains); the interaction mediates the formation of a ternary complex with BRAF, a ternary complex inhibited by GNAI1. Probably forms a complex composed of chaperones HSP90 and HSP70, co-chaperones CDC37, PPP5C, TSC1 and client protein TSC2, CDK4, AKT, RAF1 and NR3C1; this complex does not contain co-chaperones STIP1/HOP and PTGES3/p23. Interacts with STK3/MST2; the interaction inhibits its pro-apoptotic activity. Interacts (when phosphorylated at Ser-259) with YWHAZ (unphosphorylated at 'Thr-232'). Interacts with MAP2K1/MEK1 and MAP2K2/MEK2. Interacts with MAP3K5/ASF1 (via N-terminus) and this interaction inhibits the proapoptotic function of MAP3K5/ASK1. Interacts with PAK1 (via kinase domain). The Ser-338 and Ser-339 phosphorylated form (by PAK1) interacts with BCL2. Interacts with PEBP1/RKIP and this interaction is enhanced if RAF1 is phosphorylated on residues Ser-338, Ser-339, Tyr-340 and Tyr-341. Interacts with ADCY2, ADCY5, ADCY6, DGKH, RCAN1/DSCR1, PPP1R12A, PKB/AKT1, SPRY2, SPRY4, CNKSR1/CNK1, KSR2 and PHB/prohibitin. The phosphorylated form interacts with PIN1. Interacts with PPP2CA, PPP2R1B and ROCK2. In its active form, interacts with PRMT5. Interacts with FAM83B; displaces 14-3-3 proteins from RAF1 and activates RAF1. Interacts with PDE8A; the interaction promotes RAF1 activity. Interacts with MFHAS1. Interacts with GLS. Interacts with NEK10 and MAP2K1; the interaction is direct with NEK10 and required for ERK1/2-signaling pathway activation in response to UV irradiation. Requires Zn(2+) as cofactor. In terms of processing, phosphorylation at Thr-269, Ser-338, Tyr-341, Thr-491 and Ser-494 results in its activation. Phosphorylation at Ser-29, Ser-43, Ser-289, Ser-296, Ser-301 and Ser-642 by MAPK1/ERK2 results in its inactivation. Phosphorylation at Ser-259 induces the interaction with YWHAZ and inactivates kinase activity. Dephosphorylation of Ser-259 by the SHOC2-MRAS-PP1c (SMP) complex consisting of SHOC2, GTP-bound M-Ras/MRAS and the catalytic subunit of protein phosphatase 1 (PPP1CA, PPP1CB or PPP1CC); this relieves inactivation and stimulates kinase activity. Phosphorylation at Ser-338 by PAK1 and PAK5 and Ser-339 by PAK1 is required for its mitochondrial localization. Phosphorylation at Ser-621 in response to growth factor treatment stabilizes the protein, possibly by preventing proteasomal degradation. Phosphorylation at Ser-289, Ser-296, Ser-301, Ser-338 and Ser-621 are somehow linked to the methylation potential of cells. Treatment of cells with HGF in the presence of the methylation inhibitor 5'-methylthioadenosine (MTA) results in increased phosphorylation at Ser-338 and Ser-621 and decreased phosphorylation at Ser-296, Ser-301 and Ser-338. Dephosphorylation at Ser-338 by PPP5C results in a decreased of activity. Methylated at Arg-563 in response to EGF treatment. This modification leads to destabilization of the protein, possibly through proteasomal degradation. Present in all tissues tested: testis, ovary, small intestine, colon, peripheral blood leukocytes, fetal liver, bone marrow, thymus, lymph node and spleen, and the cell lines melanoma G-361, lung carcinoma A-549, colorectal adenocarcinoma SW480, Burkitt's lymphoma Raji and lymphoblastic leukemia MOLT-4. In skeletal muscle, isoform 1 is more abundant than isoform 2.

The protein resides in the cytoplasm. The protein localises to the cell membrane. It is found in the mitochondrion. It localises to the nucleus. It catalyses the reaction L-seryl-[protein] + ATP = O-phospho-L-seryl-[protein] + ADP + H(+). The enzyme catalyses L-threonyl-[protein] + ATP = O-phospho-L-threonyl-[protein] + ADP + H(+). With respect to regulation, regulation is a highly complex process involving membrane recruitment, protein-protein interactions, dimerization, and phosphorylation/dephosphorylation events. Ras-GTP recruits RAF1 to the membrane, thereby promoting its activation. The inactive conformation of RAF1 is maintained by autoinhibitory interactions occurring between the N-terminal regulatory and the C-terminal catalytic domains and by the binding of a 14-3-3 protein that contacts two phosphorylation sites, Ser-259 and Ser-621. Upon mitogenic stimulation, Ras and PPP2R1A cooperate to release autoinhibition and the subsequent phosphorylation of activating sites: Ser-338, Tyr-341, Thr-491, and Ser-494, yields a fully active kinase. Through a negative feedback mechanism involving MAPK1/ERK2, RAF1 is phosphorylated on Ser-29, Ser-43, Ser-289, Ser-296, Ser-301 and Ser-642 by MAPK1/ERK2, which yields an inactive, desensitized kinase. The signaling-competent conformation of RAF1 is finally re-established by the coordinated action of PIN1, a prolyl isomerase that converts pSer and pThr residues from the cis to the trans conformation, which is preferentially recognized and dephosphorylated by PPP2R1A. Activated by homodimerization and heterodimerization (with BRAF). Also regulated through association with other proteins such as KSR2, CNKSR1/CNK1, PEBP1/RKIP, PHB/prohibitin and SPRY4. PEBP1/RKIP acts by dissociating RAF1 from its substrates MAP2K1/MEK1 and MAP2K2/MEK2. PHB/prohibitin facilitates the displacement of 14-3-3 from RAF1 by activated Ras, thereby promoting cell membrane localization and phosphorylation of RAF1 at the activating Ser-338. SPRY4 inhibits Ras-independent, but not Ras-dependent, activation of RAF1. CNKSR1/CNK1 regulates Src-mediated RAF1 activation. Functionally, serine/threonine-protein kinase that acts as a regulatory link between the membrane-associated Ras GTPases and the MAPK/ERK cascade, and this critical regulatory link functions as a switch determining cell fate decisions including proliferation, differentiation, apoptosis, survival and oncogenic transformation. RAF1 activation initiates a mitogen-activated protein kinase (MAPK) cascade that comprises a sequential phosphorylation of the dual-specific MAPK kinases (MAP2K1/MEK1 and MAP2K2/MEK2) and the extracellular signal-regulated kinases (MAPK3/ERK1 and MAPK1/ERK2). The phosphorylated form of RAF1 (on residues Ser-338 and Ser-339, by PAK1) phosphorylates BAD/Bcl2-antagonist of cell death at 'Ser-75'. Phosphorylates adenylyl cyclases: ADCY2, ADCY5 and ADCY6, resulting in their activation. Phosphorylates PPP1R12A resulting in inhibition of the phosphatase activity. Phosphorylates TNNT2/cardiac muscle troponin T. Can promote NF-kB activation and inhibit signal transducers involved in motility (ROCK2), apoptosis (MAP3K5/ASK1 and STK3/MST2), proliferation and angiogenesis (RB1). Can protect cells from apoptosis also by translocating to the mitochondria where it binds BCL2 and displaces BAD/Bcl2-antagonist of cell death. Plays a role in the oncogenic transformation of epithelial cells via repression of the TJ protein, occludin (OCLN) by inducing the up-regulation of a transcriptional repressor SNAI2/SLUG, which induces down-regulation of OCLN. Restricts caspase activation in response to selected stimuli, notably Fas stimulation, pathogen-mediated macrophage apoptosis, and erythroid differentiation. Regulates Rho signaling and migration, and is required for normal wound healing. In Mus musculus (Mouse), this protein is RAF proto-oncogene serine/threonine-protein kinase (Raf1).